The chain runs to 126 residues: Spermidine export protein MdtJ (126 aa).

Transmembrane regions (helical) follow at residues 1 to 21, 32 to 52, 55 to 75, and 82 to 102; these read MMIYWIFLGLAIVAEIIGTLS, TGHIVMYFMITGSYIMLALAV, VALGVAYALWEGIGILIITVF, and ESLSPLKIAGLVTLVGGIMLV. Residues 104 to 126 are disordered; the sequence is SGTRKPKKPNSPNRNSGEHHATA.

Belongs to the drug/metabolite transporter (DMT) superfamily. Small multidrug resistance (SMR) (TC 2.A.7.1) family. MdtJ subfamily. In terms of assembly, forms a complex with MdtI.

The protein resides in the cell inner membrane. Functionally, catalyzes the excretion of spermidine. In Yersinia enterocolitica serotype O:8 / biotype 1B (strain NCTC 13174 / 8081), this protein is Spermidine export protein MdtJ.